A 373-amino-acid chain; its full sequence is Deoxyguanosinetriphosphate triphosphohydrolase-like protein 1 (373 aa).

Residues 21-43 are disordered; it reads RSSEARRAVPEAPSETRTAYQKD. An HD domain is found at 76–198; that stretch reads RLTHTLEVQQ…VDAADALAYT (123 aa).

Belongs to the dGTPase family. Type 2 subfamily.

This is Deoxyguanosinetriphosphate triphosphohydrolase-like protein 1 from Deinococcus radiodurans (strain ATCC 13939 / DSM 20539 / JCM 16871 / CCUG 27074 / LMG 4051 / NBRC 15346 / NCIMB 9279 / VKM B-1422 / R1).